Reading from the N-terminus, the 232-residue chain is N-(5'-phosphoribosyl)anthranilate isomerase (232 aa).

It belongs to the TrpF family.

The catalysed reaction is N-(5-phospho-beta-D-ribosyl)anthranilate = 1-(2-carboxyphenylamino)-1-deoxy-D-ribulose 5-phosphate. It participates in amino-acid biosynthesis; L-tryptophan biosynthesis; L-tryptophan from chorismate: step 3/5. This chain is N-(5'-phosphoribosyl)anthranilate isomerase (TRP1), found in Lipomyces starkeyi (Oleaginous yeast).